The chain runs to 107 residues: Protein beta (107 aa).

In Bovine ephemeral fever virus (strain BB7721) (BEFV), this protein is Protein beta (beta).